The sequence spans 489 residues: Cytochrome P450 2C41 (489 aa).

Cys-434 is a heme binding site.

Belongs to the cytochrome P450 family. The cofactor is heme.

Its subcellular location is the endoplasmic reticulum membrane. It localises to the microsome membrane. It catalyses the reaction an organic molecule + reduced [NADPH--hemoprotein reductase] + O2 = an alcohol + oxidized [NADPH--hemoprotein reductase] + H2O + H(+). Functionally, cytochromes P450 are a group of heme-thiolate monooxygenases. In liver microsomes, this enzyme is involved in an NADPH-dependent electron transport pathway. It oxidizes a variety of structurally unrelated compounds, including steroids, fatty acids, and xenobiotics. In Canis lupus familiaris (Dog), this protein is Cytochrome P450 2C41 (CYP2C41).